The primary structure comprises 242 residues: Glutamate transport ATP-binding protein GluA (242 aa).

Positions 2–236 constitute an ABC transporter domain; sequence IKMTGVQKYF…PKSDRAKDFL (235 aa). ATP is bound at residue 34 to 41; the sequence is GPSGSGKS.

This sequence belongs to the ABC transporter superfamily. The complex is composed of two ATP-binding proteins (GluA), two transmembrane proteins (GluC and GluD) and a solute-binding protein (GluB).

It localises to the cell membrane. The catalysed reaction is a polar amino acid(out) + ATP + H2O = a polar amino acid(in) + ADP + phosphate + H(+). It carries out the reaction L-glutamate(out) + ATP + H2O = L-glutamate(in) + ADP + phosphate + H(+). Part of the ABC transporter complex GluABCD involved in glutamate uptake. Probably responsible for energy coupling to the transport system. This chain is Glutamate transport ATP-binding protein GluA, found in Corynebacterium glutamicum (strain ATCC 13032 / DSM 20300 / JCM 1318 / BCRC 11384 / CCUG 27702 / LMG 3730 / NBRC 12168 / NCIMB 10025 / NRRL B-2784 / 534).